Here is a 564-residue protein sequence, read N- to C-terminus: Pyruvate decarboxylase (564 aa).

Aspartate 28 and histidine 115 together coordinate pyruvate. Residues threonine 390 and 413 to 415 (GSI) contribute to the thiamine diphosphate site. Aspartate 444 is a Mg(2+) binding site. Thiamine diphosphate-binding positions include 445-446 (GS) and 471-476 (NNGYTI). Mg(2+)-binding residues include asparagine 471 and glycine 473. Pyruvate is bound at residue glutamate 477.

Belongs to the TPP enzyme family. As to quaternary structure, homotetramer. Mg(2+) serves as cofactor. It depends on thiamine diphosphate as a cofactor.

The catalysed reaction is a 2-oxocarboxylate + H(+) = an aldehyde + CO2. It carries out the reaction pyruvate + H(+) = acetaldehyde + CO2. This is Pyruvate decarboxylase (PDC) from Hanseniaspora uvarum (Yeast).